The chain runs to 325 residues: NADH-quinone oxidoreductase subunit H (325 aa).

8 consecutive transmembrane segments (helical) span residues 11–31 (ILLSILKAVVILLVVVTCGAF), 81–101 (VIFTLAPVIAFTSLLLAFAIV), 114–134 (IGILFFLMMAGLAVYAVLFAG), 154–174 (LSYEVFLGLSLMGVVAQAGSF), 186–206 (LWNVIPQFFGFVTFAIAGVAV), 237–257 (FFVGEYIGIVTVSALIVTLFF), 265–285 (LPPFIWFALKTAFFMMMFILI), and 304–324 (VCLPLTLVNLLVTAAVILWQA).

It belongs to the complex I subunit 1 family. As to quaternary structure, NDH-1 is composed of 13 different subunits. Subunits NuoA, H, J, K, L, M, N constitute the membrane sector of the complex.

Its subcellular location is the cell inner membrane. It catalyses the reaction a quinone + NADH + 5 H(+)(in) = a quinol + NAD(+) + 4 H(+)(out). In terms of biological role, NDH-1 shuttles electrons from NADH, via FMN and iron-sulfur (Fe-S) centers, to quinones in the respiratory chain. The immediate electron acceptor for the enzyme in this species is believed to be ubiquinone. Couples the redox reaction to proton translocation (for every two electrons transferred, four hydrogen ions are translocated across the cytoplasmic membrane), and thus conserves the redox energy in a proton gradient. This subunit may bind ubiquinone. The chain is NADH-quinone oxidoreductase subunit H from Klebsiella pneumoniae (strain 342).